A 124-amino-acid polypeptide reads, in one-letter code: MAIAKEDILAAVEGMTVLELNELVKAFEEKFGVSAAAVAVAGPAGGGAAAAAEEQTEFTVMLLEAGGNKVAVIKAVRELTGLGLKEAKDLVDGAPKPVKEAVPKAAADEAKKKLEDAGAKAEIK.

It belongs to the bacterial ribosomal protein bL12 family. As to quaternary structure, homodimer. Part of the ribosomal stalk of the 50S ribosomal subunit. Forms a multimeric L10(L12)X complex, where L10 forms an elongated spine to which 2 to 4 L12 dimers bind in a sequential fashion. Binds GTP-bound translation factors.

Its function is as follows. Forms part of the ribosomal stalk which helps the ribosome interact with GTP-bound translation factors. Is thus essential for accurate translation. In Burkholderia lata (strain ATCC 17760 / DSM 23089 / LMG 22485 / NCIMB 9086 / R18194 / 383), this protein is Large ribosomal subunit protein bL12.